The primary structure comprises 458 residues: Adenylosuccinate synthetase (458 aa).

Residues Gly-11 to Gly-17 and Gly-39 to Thr-41 each bind GTP. The Proton acceptor role is filled by Asp-12. Asp-12 and Gly-39 together coordinate Mg(2+). IMP contacts are provided by residues Asp-12 to Lys-15, Asn-37 to His-40, Thr-127, Arg-141, Gln-232, Thr-247, and Arg-330. His-40 (proton donor) is an active-site residue. Residue Thr-326–Arg-332 participates in substrate binding. Residues Arg-332, His-358 to Asp-360, and Gly-443 to Gly-445 contribute to the GTP site.

The protein belongs to the adenylosuccinate synthetase family. As to quaternary structure, homodimer. It depends on Mg(2+) as a cofactor.

Its subcellular location is the cytoplasm. It catalyses the reaction IMP + L-aspartate + GTP = N(6)-(1,2-dicarboxyethyl)-AMP + GDP + phosphate + 2 H(+). It participates in purine metabolism; AMP biosynthesis via de novo pathway; AMP from IMP: step 1/2. Plays an important role in the de novo pathway of purine nucleotide biosynthesis. Catalyzes the first committed step in the biosynthesis of AMP from IMP. This Haloarcula marismortui (strain ATCC 43049 / DSM 3752 / JCM 8966 / VKM B-1809) (Halobacterium marismortui) protein is Adenylosuccinate synthetase.